The sequence spans 262 residues: Glutamate racemase (262 aa).

Substrate is bound by residues 7-8 and 39-40; these read DS and YG. C70 serves as the catalytic Proton donor/acceptor. A substrate-binding site is contributed by 71 to 72; it reads NT. The Proton donor/acceptor role is filled by C182. 183–184 contacts substrate; the sequence is TH.

The protein belongs to the aspartate/glutamate racemases family.

The catalysed reaction is L-glutamate = D-glutamate. It participates in cell wall biogenesis; peptidoglycan biosynthesis. Provides the (R)-glutamate required for cell wall biosynthesis. The protein is Glutamate racemase of Campylobacter concisus (strain 13826).